Consider the following 412-residue polypeptide: Serine hydroxymethyltransferase (412 aa).

(6S)-5,6,7,8-tetrahydrofolate is bound by residues Leu117 and 121 to 123; that span reads GHL. Lys226 carries the N6-(pyridoxal phosphate)lysine modification. Residue Glu241 coordinates (6S)-5,6,7,8-tetrahydrofolate.

The protein belongs to the SHMT family. Homodimer. It depends on pyridoxal 5'-phosphate as a cofactor.

It is found in the cytoplasm. The catalysed reaction is (6R)-5,10-methylene-5,6,7,8-tetrahydrofolate + glycine + H2O = (6S)-5,6,7,8-tetrahydrofolate + L-serine. It participates in one-carbon metabolism; tetrahydrofolate interconversion. It functions in the pathway amino-acid biosynthesis; glycine biosynthesis; glycine from L-serine: step 1/1. Its function is as follows. Catalyzes the reversible interconversion of serine and glycine with tetrahydrofolate (THF) serving as the one-carbon carrier. This reaction serves as the major source of one-carbon groups required for the biosynthesis of purines, thymidylate, methionine, and other important biomolecules. Also exhibits THF-independent aldolase activity toward beta-hydroxyamino acids, producing glycine and aldehydes, via a retro-aldol mechanism. The protein is Serine hydroxymethyltransferase of Staphylococcus carnosus (strain TM300).